Here is a 134-residue protein sequence, read N- to C-terminus: Cytochrome b (134 aa).

The next 3 membrane-spanning stretches (helical) occupy residues 33–53 (FGSLLGVCLAVQILTGLFLAM), 77–98 (WLLRYLHANGASMFFICLYLHV), and 113–133 (WNVGILLLFAVMATAFMGYVL). Heme b-binding residues include histidine 83 and histidine 97.

Belongs to the cytochrome b family. As to quaternary structure, the cytochrome bc1 complex contains 11 subunits: 3 respiratory subunits (MT-CYB, CYC1 and UQCRFS1), 2 core proteins (UQCRC1 and UQCRC2) and 6 low-molecular weight proteins (UQCRH/QCR6, UQCRB/QCR7, UQCRQ/QCR8, UQCR10/QCR9, UQCR11/QCR10 and a cleavage product of UQCRFS1). This cytochrome bc1 complex then forms a dimer. It depends on heme b as a cofactor.

It localises to the mitochondrion inner membrane. Its function is as follows. Component of the ubiquinol-cytochrome c reductase complex (complex III or cytochrome b-c1 complex) that is part of the mitochondrial respiratory chain. The b-c1 complex mediates electron transfer from ubiquinol to cytochrome c. Contributes to the generation of a proton gradient across the mitochondrial membrane that is then used for ATP synthesis. This Chiroderma trinitatum (Little big-eyed bat) protein is Cytochrome b (MT-CYB).